The chain runs to 127 residues: Small ribosomal subunit protein uS13 (127 aa).

A disordered region spans residues 99-127 (RGQRTRTNARTRRGRRGQAIGIKKKTLKK).

It belongs to the universal ribosomal protein uS13 family. In terms of assembly, part of the 30S ribosomal subunit. Forms a loose heterodimer with protein S19. Forms two bridges to the 50S subunit in the 70S ribosome.

Functionally, located at the top of the head of the 30S subunit, it contacts several helices of the 16S rRNA. In the 70S ribosome it contacts the 23S rRNA (bridge B1a) and protein L5 of the 50S subunit (bridge B1b), connecting the 2 subunits; these bridges are implicated in subunit movement. Contacts the tRNAs in the A and P-sites. This Roseiflexus castenholzii (strain DSM 13941 / HLO8) protein is Small ribosomal subunit protein uS13.